We begin with the raw amino-acid sequence, 368 residues long: Probable leucine aminopeptidase ARB_03492 (368 aa).

The first 18 residues, 1-18, serve as a signal peptide directing secretion; that stretch reads MKVSAIAAVAALAAVAVA. N92 carries N-linked (GlcNAc...) asparagine glycosylation. Residues H172 and D191 each contribute to the Zn(2+) site. N192 and N216 each carry an N-linked (GlcNAc...) asparagine glycan. 2 residues coordinate Zn(2+): E230 and D257. C301 and C305 are disulfide-bonded. H334 contributes to the Zn(2+) binding site.

This sequence belongs to the peptidase M28 family. M28E subfamily. As to quaternary structure, monomer. Zn(2+) is required as a cofactor.

It is found in the secreted. Probable extracellular aminopeptidase which contributes to pathogenicity. In Arthroderma benhamiae (strain ATCC MYA-4681 / CBS 112371) (Trichophyton mentagrophytes), this protein is Probable leucine aminopeptidase ARB_03492.